The following is a 1449-amino-acid chain: MGARNSVLSGKEADELEKVRLRPNGKKKYMLKHVVWAANELDRFGLAESLLDNKEGCQKILSVLAPLVPTGSENLKSLYNTVCVIWCIHAEEKVKHTEEAKQIVQRHLVVETGTADRMPATSRPTAPPSGRGGNYPVQQVGGNYVHLPLSPRTLNAWVKLVEEKKFGAEVVPGFQALSEGCTPYDINQMLNCVGEHQAAMQIIREIINEEAADWDLQHPQPGPLPAGQLREPRGSDIAGTTSTVDEQIQWMYRQQNPIPVGNIYRRWIQLGLQKCVRMYNPTNILDVKQGPKEPFQSYVDRFYKSLRAEQTDPAVKNWMTQTLLIQNANPDCKLVLKGLGMNPTLEEMLTACQGVGGPGQKARLMAEALKEALRPDQLPFAAVQQKGQRKTIKCWNCGKEGHSAKQCRAPRRQGCWKCGKTGHVMAKCPERQAGFFRAWPMGKEAPQFPHGPDASGADTNCSPRGSSCGSTEELHEDGQKAEGEQRETLQGGDRGFAAPQFSLWRRPVVTAYIEEQPVEVLLDTGADDSIVAGIELGPNYTPKIVGGIGGFINTKEYKDVKIKVLGKVIKGTIMTGDTPINIFGRNLLTAMGMSLNLPIAKVEPIKVTLKPGKEGPKLRQWPLSKEKIIALREICEKMEKDGQLEEAPPTNPYNTPTFAIKKKDKNKWRMLIDFRELNKVTQDFTEVQLGIPHPAGLAKRRRITVLDVGDAYFSIPLDEEFRQYTAFTLPSVNNAEPGKRYIYKVLPQGWKGSPAIFQYTMRNVLEPFRKANPDVTLIQYMDDILIASDRTDLEHDRVVLQLKELLNGIGFSTPEEKFQKDPPFQWMGYELWPTKWKLQKIELPQRETWTVNDIQKLVGVLNWAAQIYPGIKTKHLCRLIRGKMTLTEEVQWTEMAEAEYEENKIILSQEQEGCYYQEGKPIEATVIKSQDNQWSYKIHQEDKVLKVGKFAKVKNTHTNGVRLLAHVVQKIGKEALVIWGEVPKFHLPVEREIWEQWWTDYWQVTWIPDWDFVSTPPLVRLVFNLVKEPIQGAETFYVDGSCNRQSREGKAGYVTDRGRDKAKLLEQTTNQQAELEAFYLALADSGPKANIIVDSQYVMGIIAGQPTESESRLVNQIIEEMIKKEAIYVAWVPAHKGIGGNQEVDHLVSQGIRQVLFLKKIEPAQEEHEKYHSNVKELVFKFGLPRLVAKQIVDTCDKCHQKGEAIHGQVNAELGTWQMDCTHLEGKIIIVAVHVASGFIEAEVIPQETGRQTALFLLKLAGRWPITHLHTDNGANFTSQEVKMVAWWAGIEQTFGVPYNPQSQGVVEAMNHHLKTQIDRIREQANSIETIVLMAVHCMNFKRRGGIGDMTPAERLVNMITTEQEIQFQQSKNSKFKNFRVYYREGRDQLWKGPGELLWKGEGAVILKVGTEIKVVPRRKAKIIKDYGGGKELDSGSHLEDTGEAREVA.

The N-myristoyl glycine; by host moiety is linked to residue Gly-2. The Nuclear export signal signature appears at 16–22 (LEKVRLR). The Nuclear localization signal motif lies at 26–32 (KKKYMLK). The interval 215 to 237 (DLQHPQPGPLPAGQLREPRGSDI) is disordered. 2 CCHC-type zinc fingers span residues 392-409 (IKCW…QCRA) and 413-430 (QGCW…KCPE). The tract at residues 442–494 (GKEAPQFPHGPDASGADTNCSPRGSSCGSTEELHEDGQKAEGEQRETLQGGDR) is disordered. The segment covering 457–470 (ADTNCSPRGSSCGS) has biased composition (polar residues). Residues 472–487 (EELHEDGQKAEGEQRE) show a composition bias toward basic and acidic residues. Positions 518–587 (VEVLLDTGAD…TPINIFGRNL (70 aa)) constitute a Peptidase A2 domain. The active-site For protease activity; shared with dimeric partner is the Asp-523. The 191-residue stretch at 641–831 (DGQLEEAPPT…PPFQWMGYEL (191 aa)) folds into the Reverse transcriptase domain. Positions 707, 782, and 783 each coordinate Mg(2+). An RT 'primer grip' region spans residues 824–832 (FQWMGYELW). The Tryptophan repeat motif motif lies at 994 to 1010 (WEQWWTDYWQVTWIPDW). An RNase H type-1 domain is found at 1030–1153 (IQGAETFYVD…VDHLVSQGIR (124 aa)). The Mg(2+) site is built by Asp-1039, Glu-1074, Asp-1094, and Asp-1145. An Integrase-type zinc finger spans residues 1159 to 1200 (KKIEPAQEEHEKYHSNVKELVFKFGLPRLVAKQIVDTCDKCH). Zn(2+) contacts are provided by His-1168, His-1172, Cys-1196, and Cys-1199. One can recognise an Integrase catalytic domain in the interval 1210 to 1360 (VNAELGTWQM…TPAERLVNMI (151 aa)). Residues Asp-1220 and Asp-1272 each contribute to the Mg(2+) site. A DNA-binding region (integrase-type) is located at residues 1379 to 1426 (FRVYYREGRDQLWKGPGELLWKGEGAVILKVGTEIKVVPRRKAKIIKD).

In terms of assembly, homotrimer. Interacts with gp41 (via C-terminus). As to quaternary structure, homodimer. The active site consists of two apposed aspartic acid residues. Heterodimer of p66 RT and p51 RT (RT p66/p51). Heterodimerization of RT is essential for DNA polymerase activity. Despite the sequence identities, p66 RT and p51 RT have distinct folding. In terms of assembly, homotetramer; may further associate as a homohexadecamer. The cofactor is Mg(2+). In terms of processing, specific enzymatic cleavages by the viral protease yield mature proteins. The protease is released by autocatalytic cleavage. The polyprotein is cleaved during and after budding, this process is termed maturation. Proteolytic cleavage of p66 RT removes the RNase H domain to yield the p51 RT subunit. Capsid protein p24 is phosphorylated.

It is found in the virion. The protein resides in the host nucleus. It localises to the host cytoplasm. The protein localises to the host cell membrane. The enzyme catalyses Specific for a P1 residue that is hydrophobic, and P1' variable, but often Pro.. The catalysed reaction is Endohydrolysis of RNA in RNA/DNA hybrids. Three different cleavage modes: 1. sequence-specific internal cleavage of RNA. Human immunodeficiency virus type 1 and Moloney murine leukemia virus enzymes prefer to cleave the RNA strand one nucleotide away from the RNA-DNA junction. 2. RNA 5'-end directed cleavage 13-19 nucleotides from the RNA end. 3. DNA 3'-end directed cleavage 15-20 nucleotides away from the primer terminus.. It catalyses the reaction 3'-end directed exonucleolytic cleavage of viral RNA-DNA hybrid.. It carries out the reaction DNA(n) + a 2'-deoxyribonucleoside 5'-triphosphate = DNA(n+1) + diphosphate. With respect to regulation, the viral protease is inhibited by many synthetic protease inhibitors (PIs), such as amprenavir, atazanavir, indinavir, loprinavir, nelfinavir, ritonavir and saquinavir. RT can be inhibited either by nucleoside RT inhibitors (NRTIs) or by non nucleoside RT inhibitors (NNRTIs). NRTIs act as chain terminators, whereas NNRTIs inhibit DNA polymerization by binding a small hydrophobic pocket near the RT active site and inducing an allosteric change in this region. Classical NRTIs are abacavir, adefovir (PMEA), didanosine (ddI), lamivudine (3TC), stavudine (d4T), tenofovir (PMPA), zalcitabine (ddC), and zidovudine (AZT). Classical NNRTIs are atevirdine (BHAP U-87201E), delavirdine, efavirenz (DMP-266), emivirine (I-EBU), and nevirapine (BI-RG-587). The tritherapies used as a basic effective treatment of AIDS associate two NRTIs and one NNRTI. Use of protease inhibitors in tritherapy regimens permit more ambitious therapeutic strategies. In terms of biological role, gag-Pol polyprotein and Gag polyprotein may regulate their own translation, by the binding genomic RNA in the 5'-UTR. At low concentration, Gag-Pol and Gag would promote translation, whereas at high concentration, the polyproteins encapsidate genomic RNA and then shut off translation. Functionally, matrix protein p17 has two main functions: in infected cell, it targets Gag and Gag-pol polyproteins to the plasma membrane via a multipartite membrane-binding signal, that includes its myristointegration complex. The myristoylation signal and the NLS exert conflicting influences its subcellular localization. The key regulation of these motifs might be phosphorylation of a portion of MA molecules on the C-terminal tyrosine at the time of virus maturation, by virion-associated cellular tyrosine kinase. Implicated in the release from host cell mediated by Vpu. Its function is as follows. Capsid protein p24 forms the conical core that encapsulates the genomic RNA-nucleocapsid complex in the virion. The core is constituted by capsid protein hexamer subunits. The core is disassembled soon after virion entry. Interaction with host PPIA/CYPA protects the virus from restriction by host TRIM5-alpha and from an unknown antiviral activity in host cells. This capsid restriction by TRIM5 is one of the factors which restricts SIV to the simian species. Nucleocapsid protein p7 encapsulates and protects viral dimeric unspliced (genomic) RNA. Binds these RNAs through its zinc fingers. Facilitates rearangement of nucleic acid secondary structure during retrotranscription of genomic RNA. This capability is referred to as nucleic acid chaperone activity. In terms of biological role, the aspartyl protease mediates proteolytic cleavages of Gag and Gag-Pol polyproteins during or shortly after the release of the virion from the plasma membrane. Cleavages take place as an ordered, step-wise cascade to yield mature proteins. This process is called maturation. Displays maximal activity during the budding process just prior to particle release from the cell. Also cleaves Nef and Vif, probably concomitantly with viral structural proteins on maturation of virus particles. Hydrolyzes host EIF4GI and PABP1 in order to shut off the capped cellular mRNA translation. The resulting inhibition of cellular protein synthesis serves to ensure maximal viral gene expression and to evade host immune response. Functionally, reverse transcriptase/ribonuclease H (RT) is a multifunctional enzyme that converts the viral dimeric RNA genome into dsDNA in the cytoplasm, shortly after virus entry into the cell. This enzyme displays a DNA polymerase activity that can copy either DNA or RNA templates, and a ribonuclease H (RNase H) activity that cleaves the RNA strand of RNA-DNA heteroduplexes in a partially processive 3' to 5' endonucleasic mode. Conversion of viral genomic RNA into dsDNA requires many steps. A tRNA binds to the primer-binding site (PBS) situated at the 5'-end of the viral RNA. RT uses the 3' end of the tRNA primer to perform a short round of RNA-dependent minus-strand DNA synthesis. The reading proceeds through the U5 region and ends after the repeated (R) region which is present at both ends of viral RNA. The portion of the RNA-DNA heteroduplex is digested by the RNase H, resulting in a ssDNA product attached to the tRNA primer. This ssDNA/tRNA hybridizes with the identical R region situated at the 3' end of viral RNA. This template exchange, known as minus-strand DNA strong stop transfer, can be either intra- or intermolecular. RT uses the 3' end of this newly synthesized short ssDNA to perform the RNA-dependent minus-strand DNA synthesis of the whole template. RNase H digests the RNA template except for two polypurine tracts (PPTs) situated at the 5'-end and near the center of the genome. It is not clear if both polymerase and RNase H activities are simultaneous. RNase H can probably proceed both in a polymerase-dependent (RNA cut into small fragments by the same RT performing DNA synthesis) and a polymerase-independent mode (cleavage of remaining RNA fragments by free RTs). Secondly, RT performs DNA-directed plus-strand DNA synthesis using the PPTs that have not been removed by RNase H as primers. PPTs and tRNA primers are then removed by RNase H. The 3' and 5' ssDNA PBS regions hybridize to form a circular dsDNA intermediate. Strand displacement synthesis by RT to the PBS and PPT ends produces a blunt ended, linear dsDNA copy of the viral genome that includes long terminal repeats (LTRs) at both ends. Its function is as follows. Integrase catalyzes viral DNA integration into the host chromosome, by performing a series of DNA cutting and joining reactions. This enzyme activity takes place after virion entry into a cell and reverse transcription of the RNA genome in dsDNA. The first step in the integration process is 3' processing. This step requires a complex comprising the viral genome, matrix protein, Vpr and integrase. This complex is called the pre-integration complex (PIC). The integrase protein removes 2 nucleotides from each 3' end of the viral DNA, leaving recessed CA OH's at the 3' ends. In the second step, the PIC enters cell nucleus. This process is mediated through integrase and Vpr proteins, and allows the virus to infect a non dividing cell. This ability to enter the nucleus is specific of lentiviruses, other retroviruses cannot and rely on cell division to access cell chromosomes. In the third step, termed strand transfer, the integrase protein joins the previously processed 3' ends to the 5' ends of strands of target cellular DNA at the site of integration. The 5'-ends are produced by integrase-catalyzed staggered cuts, 5 bp apart. A Y-shaped, gapped, recombination intermediate results, with the 5'-ends of the viral DNA strands and the 3' ends of target DNA strands remaining unjoined, flanking a gap of 5 bp. The last step is viral DNA integration into host chromosome. This involves host DNA repair synthesis in which the 5 bp gaps between the unjoined strands are filled in and then ligated. Since this process occurs at both cuts flanking the SIV genome, a 5 bp duplication of host DNA is produced at the ends of SIV integration. Alternatively, Integrase may catalyze the excision of viral DNA just after strand transfer, this is termed disintegration. The sequence is that of Gag-Pol polyprotein (gag-pol) from Cercopithecidae (Old World monkeys).